The following is a 1063-amino-acid chain: Cellulose synthase A catalytic subunit 7 [UDP-forming] (1063 aa).

The Cytoplasmic segment spans residues 1-213 (MDTASVTGGE…IPSSKINPYR (213 aa)). Residues Cys-18, Cys-21, Cys-37, Cys-40, Cys-45, Cys-48, Cys-60, and Cys-63 each coordinate Zn(2+). Residues 18–64 (CRVCGEEVAAREDGKPFVACAECGFPVCKPCYEYERSEGTQCCPQCN) form an RING-type; degenerate zinc finger. Residues 116–154 (NGEQPAQKWRPGGPALSSFTGSVAGKDLEQEREMEGGME) form a disordered region. Basic and acidic residues predominate over residues 141-154 (KDLEQEREMEGGME). A helical transmembrane segment spans residues 214 to 234 (IVIVLRLVVLCFFLKFRITTP). Topologically, residues 235-237 (AMD) are extracellular. Residues 238-258 (AVPLWLASVICELWFALSWIL) form a helical membrane-spanning segment. At 259–845 (DQLPKWSPVT…TNTIVYPFTS (587 aa)) the chain is on the cytoplasmic side. Ser-297, Lys-303, Glu-304, and Asp-333 together coordinate UDP-alpha-D-glucose. Residue Asp-333 is part of the active site. Residues 387-414 (VKERRAMKREYEEFKVRINALVAKAQKK) adopt a coiled-coil conformation. Residue Lys-474 participates in UDP-alpha-D-glucose binding. Positions 475 and 499 each coordinate Mn(2+). The active site involves Asp-762. Residues 846 to 866 (IPLLAYCTIPAVCLLTGKFII) form a helical membrane-spanning segment. Topologically, residues 867–871 (PTLNN) are extracellular. The chain crosses the membrane as a helical span at residues 872 to 892 (LASIWFIALFLSIIATGVLEL). Topologically, residues 893 to 907 (RWSGVSIEDWWRNEQ) are cytoplasmic. The helical transmembrane segment at 908–928 (FWVIGGVSAHLFAVFQGLLKV) threads the bilayer. At 929–959 (LGGVDTNFTVTSKAAADETDAFGELYLFKWT) the chain is on the extracellular side. An N-linked (GlcNAc...) asparagine glycan is attached at Asn-935. The helical transmembrane segment at 960–980 (TLLVPPTTLIIINMVGIVAGV) threads the bilayer. Residues 981 to 991 (SDAVNNGYGSW) lie on the Cytoplasmic side of the membrane. Residues 992–1012 (GPLFGKLFFSFWVILHLYPFL) form a helical membrane-spanning segment. Residues 1013 to 1021 (KGLMGRQNR) are Extracellular-facing. A helical membrane pass occupies residues 1022–1042 (TPTIVVLWSILLASIFSLVWV). The Cytoplasmic segment spans residues 1043–1063 (RIDPFIPKPKGPVLKPCGVSC).

It belongs to the glycosyltransferase 2 family. Plant cellulose synthase subfamily. The cofactor is Mn(2+). Requires Zn(2+) as cofactor.

It localises to the cell membrane. The enzyme catalyses [(1-&gt;4)-beta-D-glucosyl](n) + UDP-alpha-D-glucose = [(1-&gt;4)-beta-D-glucosyl](n+1) + UDP + H(+). The protein operates within glycan metabolism; plant cellulose biosynthesis. Functionally, catalytic subunit of cellulose synthase terminal complexes ('rosettes'), required for beta-1,4-glucan microfibril crystallization, a major mechanism of the cell wall formation. Involved in the secondary cell wall formation. This is Cellulose synthase A catalytic subunit 7 [UDP-forming] (CESA7) from Oryza sativa subsp. japonica (Rice).